The sequence spans 461 residues: MSNKKELLWASRFNEPFDSEALRFSSSVHVDGKLYREDIQGSIAHATMLGEEGIISADDAHAICRGLKEIEKEIETGTLVPQWEDEDIHTVIENRLKEKIGAAAGKLHSGRSRNDQVATDTRLYMRERIEELQEALNDLLGTLVQKAETYKDSIIFGYTHLQRAQPISAGHYYLAYFNMFNRDTERLLDLLMRVNVSPLGAAAFAGSTLPLNAGRTAELLDFSELFTNSIDAVSDRDILIEFISCCSIVMMHLSRFCEDIILWSSYEFGYLEISDAFSTGSSIMPQKKNADIAELIRGKTGRVYGDLMAMLTIMKGLPLSYNRDMQEDKPPLFDSAETAISSVTLFNRMLQHTRLREERLKELTKKDLSLATEIAEYLVKKDVPFRDAHRITGKIVSWSIENQTPLPDIPLERFREFSEVFDEGIFTALTPEASITSKKSHGSCSFESVERQIREARELLG.

The protein belongs to the lyase 1 family. Argininosuccinate lyase subfamily.

The protein localises to the cytoplasm. The catalysed reaction is 2-(N(omega)-L-arginino)succinate = fumarate + L-arginine. It functions in the pathway amino-acid biosynthesis; L-arginine biosynthesis; L-arginine from L-ornithine and carbamoyl phosphate: step 3/3. In Chlorobium luteolum (strain DSM 273 / BCRC 81028 / 2530) (Pelodictyon luteolum), this protein is Argininosuccinate lyase.